The chain runs to 290 residues: Shikimate dehydrogenase (NADP(+)) (290 aa).

Residues 20–22 (SLS) and T67 contribute to the shikimate site. K71 functions as the Proton acceptor in the catalytic mechanism. 2 residues coordinate shikimate: N92 and D107. Residues 132–136 (GAGGA) and M228 each bind NADP(+). Position 230 (Y230) interacts with shikimate. Residue G251 participates in NADP(+) binding.

It belongs to the shikimate dehydrogenase family. Homodimer.

It carries out the reaction shikimate + NADP(+) = 3-dehydroshikimate + NADPH + H(+). It functions in the pathway metabolic intermediate biosynthesis; chorismate biosynthesis; chorismate from D-erythrose 4-phosphate and phosphoenolpyruvate: step 4/7. Involved in the biosynthesis of the chorismate, which leads to the biosynthesis of aromatic amino acids. Catalyzes the reversible NADPH linked reduction of 3-dehydroshikimate (DHSA) to yield shikimate (SA). This Citrifermentans bemidjiense (strain ATCC BAA-1014 / DSM 16622 / JCM 12645 / Bem) (Geobacter bemidjiensis) protein is Shikimate dehydrogenase (NADP(+)).